The sequence spans 99 residues: Photosystem II reaction center Psb28 protein (99 aa).

This sequence belongs to the Psb28 family. As to quaternary structure, part of the photosystem II complex.

It is found in the cell inner membrane. The chain is Photosystem II reaction center Psb28 protein from Gloeobacter violaceus (strain ATCC 29082 / PCC 7421).